Here is a 295-residue protein sequence, read N- to C-terminus: uncharacterized protein (295 aa).

2 disordered regions span residues 33–52 (VDAP…DSHS) and 180–295 (LSKA…AELK). Residue Ser-50 is modified to Phosphoserine. 2 stretches are compositionally biased toward polar residues: residues 205-217 (QKNS…SKLI) and 241-251 (TSRASVLSQSP). A compositionally biased stretch (acidic residues) spans 267-276 (EASEGPEDTP). The segment covering 277 to 289 (ESSQSPEESVSAS) has biased composition (low complexity).

This is an uncharacterized protein from Homo sapiens (Human).